Here is a 49-residue protein sequence, read N- to C-terminus: Large ribosomal subunit protein eL40 (49 aa).

This sequence belongs to the eukaryotic ribosomal protein eL40 family.

The polypeptide is Large ribosomal subunit protein eL40 (Haloquadratum walsbyi (strain DSM 16790 / HBSQ001)).